Consider the following 265-residue polypeptide: Protein synthesis inhibitor PD-S2 (265 aa).

2 cysteine pairs are disulfide-bonded: Cys-34–Cys-262 and Cys-88–Cys-110. N-linked (GlcNAc...) asparagine glycosylation occurs at Asn-120.

The protein belongs to the ribosome-inactivating protein family. Type 1 RIP subfamily. In terms of processing, glycosylated. In terms of tissue distribution, seeds.

It carries out the reaction Endohydrolysis of the N-glycosidic bond at one specific adenosine on the 28S rRNA.. Inhibits protein synthesis in animal cells. Useful as immunotoxin for pharmacological applications. The polypeptide is Protein synthesis inhibitor PD-S2 (Phytolacca dioica (Bella sombra tree)).